The sequence spans 165 residues: Growth arrest and DNA damage-inducible protein GADD45 alpha (165 aa).

The residue at position 2 (threonine 2) is a Phosphothreonine.

The protein belongs to the GADD45 family. Interacts with MAPK14. Predominantly monomeric but also forms dimers and other oligomers as concentration increases. Interacts with GADD45GIP1. Interacts weakly with PCNA. Interacts with AURKA, likely to compete with dimerization.

The protein resides in the nucleus. In T-cells, functions as a regulator of p38 MAPKs by inhibiting p88 phosphorylation and activity. Might affect PCNA interaction with some CDK (cell division protein kinase) complexes; stimulates DNA excision repair in vitro and inhibits entry of cells into S phase. This chain is Growth arrest and DNA damage-inducible protein GADD45 alpha (GADD45A), found in Homo sapiens (Human).